The sequence spans 405 residues: Corticosteroid-binding globulin (405 aa).

The N-terminal stretch at 1-22 is a signal peptide; the sequence is MPLLLYTCLLWLPTSGLWTVQA. 3 N-linked (GlcNAc...) asparagine glycosylation sites follow: asparagine 31, asparagine 96, and asparagine 176. Residue glutamine 254 participates in cortisol binding. Asparagine 260 carries N-linked (GlcNAc...) asparagine glycosylation. A cortisol-binding site is contributed by asparagine 286. Residues asparagine 330 and asparagine 369 are each glycosylated (N-linked (GlcNAc...) asparagine). Residues histidine 390 and tryptophan 393 each coordinate cortisol.

The protein belongs to the serpin family. N-glycosylated; binds 5 oligosaccharide chains. In terms of processing, glycosylation in position Asn-260 is needed for steroid binding. In terms of tissue distribution, plasma; synthesized in liver. Has also been identified in a number of glycocorticoid responsive cells.

The protein resides in the secreted. In terms of biological role, major transport protein for glucocorticoids and progestins in the blood of almost all vertebrate species. In Homo sapiens (Human), this protein is Corticosteroid-binding globulin (SERPINA6).